Reading from the N-terminus, the 329-residue chain is Small ribosomal subunit protein RACK1 (329 aa).

WD repeat units lie at residues 19-59 (GHNG…ATSP), 68-107 (GHSHFVQDVVISHDGQFALSGSWDNTLRLWDITKGVSTRL), 110-149 (GHTQDVMSVAFSSDNRQIISGSRDATIKVWNTLGECKFTL), 154-193 (AHQDWVSCIRFSPNTPTIVSGSWDNKVKIWDIKSFKCNHT), 196-235 (DHTGYVNTVTISPDGSLCASGGKDTFACLWELSSGKPLYK), 237-275 (EARNTINALAFSPNKYWLSAATDDKIIIWDLLTKQVLAE), and 295-328 (PKAPACLSLAWSADGSVLYAGYNDGLIRVYKSSS).

Belongs to the WD repeat G protein beta family. Ribosomal protein RACK1 subfamily.

The protein is Small ribosomal subunit protein RACK1 (gpbB) of Dictyostelium discoideum (Social amoeba).